Consider the following 154-residue polypeptide: Transcriptional repressor NrdR (154 aa).

A zinc finger spans residues 3–34 (CPYCQSEDTQVKDSRPAEDGAAIRRRRACPVC). The ATP-cone domain occupies 49–139 (LVVVKRTGRK…VYRNFREAKD (91 aa)).

This sequence belongs to the NrdR family. Zn(2+) serves as cofactor.

Functionally, negatively regulates transcription of bacterial ribonucleotide reductase nrd genes and operons by binding to NrdR-boxes. This Chelativorans sp. (strain BNC1) protein is Transcriptional repressor NrdR.